The sequence spans 351 residues: MRKIIHVDMDCFFAAVEMRDNPALRDIPIAIGGSRERRGVISTANYPARKFGVRSAMPTGMALKLCPHLTLLPGRFDAYKEASNHIREIFSRYTSRIEPLSLDEAYLDVTDSVHCHGSATLIAQEIRQTIFNELQLTASAGVAPVKFLAKIASDMNKPNGQFVITPAEVPAFLQTLPLAKIPGVGKVSAAKLEAIGLRTCGDVQKCDLVILLKRFGKFGRILWERSQGIDERDVNSERLRKSVGVERTMAEDIHHWSECEAIIERLYPELERRLAKVKPDLLIARQGVKLKFDDFQQTTQEHVWPRLNKADLIATARKTWDERRGGRGVRLVGLHVTLLDPQMERQLVLGL.

The 182-residue stretch at 4–185 folds into the UmuC domain; sequence IIHVDMDCFF…LPLAKIPGVG (182 aa). Residues aspartate 8 and aspartate 103 each coordinate Mg(2+). Glutamate 104 is an active-site residue.

It belongs to the DNA polymerase type-Y family. In terms of assembly, monomer. The cofactor is Mg(2+).

It is found in the cytoplasm. The catalysed reaction is DNA(n) + a 2'-deoxyribonucleoside 5'-triphosphate = DNA(n+1) + diphosphate. Poorly processive, error-prone DNA polymerase involved in untargeted mutagenesis. Copies undamaged DNA at stalled replication forks, which arise in vivo from mismatched or misaligned primer ends. These misaligned primers can be extended by PolIV. Exhibits no 3'-5' exonuclease (proofreading) activity. May be involved in translesional synthesis, in conjunction with the beta clamp from PolIII. The sequence is that of DNA polymerase IV from Shigella dysenteriae serotype 1 (strain Sd197).